The following is a 161-amino-acid chain: Large ribosomal subunit protein mL50 (161 aa).

The disordered stretch occupies residues 27 to 51 (WGGHSKKEEKEVEENSIIPQEKKEP).

Belongs to the mitochondrion-specific ribosomal protein mL50 family. In terms of assembly, component of the mitochondrial ribosome large subunit (39S) which comprises a 16S rRNA and about 50 distinct proteins.

It is found in the mitochondrion. The sequence is that of Large ribosomal subunit protein mL50 (MRPL50) from Gallus gallus (Chicken).